The primary structure comprises 529 residues: Glucose transporter 2A (529 aa).

Positions 1-22 (MTERRDNVSHAPDAIEGPNDGA) are disordered. The Cytoplasmic segment spans residues 1-43 (MTERRDNVSHAPDAIEGPNDGAHAEDTSPGFFSFENLGVAQVQ). Residues 44–64 (VVGGTLNGFSIGFVAVYILLY) form a helical membrane-spanning segment. The Extracellular portion of the chain corresponds to 65-119 (EVATNCSLFKTTEACKAVGSYGCEWKDTEVCSWKKECDSDSDGVNPCESLIGYSS). Residues 120–140 (LYSGIFASAMIVGSMVGSIIA) form a helical membrane-spanning segment. Residues 141–152 (GKCITMFGLKKS) are Cytoplasmic-facing. A helical transmembrane segment spans residues 153 to 173 (FIIVGVMSVVASALNHISVAT). Over 174–175 (NE) the chain is Extracellular. The chain crosses the membrane as a helical span at residues 176-196 (FWVLCAGRVLMGIGLGVVCVI). Residues 197 to 214 (CPMYVNENAHPKLSKVDG) lie on the Cytoplasmic side of the membrane. The helical transmembrane segment at 215–235 (VLFQVFITFGIMLAAMLGLIL) threads the bilayer. At 236-250 (DKTVNYDNDPDMAGR) the chain is on the extracellular side. Residues 251–271 (FHGFCAVSSVLSVAMFLVGMF) form a helical membrane-spanning segment. The Cytoplasmic segment spans residues 272-300 (LRESTATFSQDDDGKADGGMDPNEYGWGQ). Residues 301–321 (MLWPLFMGAVTAGTLQLTGIN) traverse the membrane as a helical segment. At 322–339 (AVMNYAPKITENLGMDPS) the chain is on the extracellular side. Residues 340-360 (LGNFLVMAWNFVTSLVAIPLA) form a helical membrane-spanning segment. Topologically, residues 361-368 (SRFTMRQM) are cytoplasmic. The chain crosses the membrane as a helical span at residues 369-389 (FITCSFVASCMCLFLCGIPVF). Over 390–404 (PGVAEEKVKNGVATT) the chain is Extracellular. The chain crosses the membrane as a helical span at residues 405–425 (GIALFIAAFEFGVGSCFFVLA). The Cytoplasmic segment spans residues 426–439 (QDLFPPSFRPKGSS). The chain crosses the membrane as a helical span at residues 440-460 (FVVMMQFIFNILINLLYPITT). At 461 to 476 (EAISGGATGDQDKGQA) the chain is on the extracellular side. A helical membrane pass occupies residues 477 to 497 (VVFILFGLIGLICFVLQFFYL). The Cytoplasmic segment spans residues 498-529 (YPYDANQDHENDHGTEPVERILSPVDVPTPRN). Positions 508–529 (NDHGTEPVERILSPVDVPTPRN) are disordered.

The protein belongs to the major facilitator superfamily. Sugar transporter (TC 2.A.1.1) family.

It is found in the membrane. Facilitative glucose transporter. The chain is Glucose transporter 2A (THT2A) from Trypanosoma brucei brucei.